Reading from the N-terminus, the 378-residue chain is MNKPLRNSHPLFKIANNALVDLPAPINISSWWNFGSLLGLCLIIQILTGLFLAMHYTADINLAFYSVNHICRDVNYGWLLRTLHANGASFFFICIYLHVGRGIYYGSYMFTPTWLIGVIILFLVMGTAFMGYVLPWGQMSFWGATVITNLLSAIPYLGMDLVQWLWGGFAVDNATLTRFFTFHFILPFIVLAMTMIHLLFLHQTGSNNPIGLNSNIDKIPFHPYFTFKDIVGFTVMIFILISLVLISPNLLGDPDNFIPANPLVTPAHIQPEWYFLFAYAILRSIPNKLGGVIALVLSIAILMILPFYNLSKFRGIQFYPINQVMFWSMLVTVILLTWIGARPVEEPYVLIGQILTVMYFLYYLVNPLITKWWDNLLN.

A run of 4 helical transmembrane segments spans residues 34–54, 78–99, 114–134, and 179–199; these read FGSL…FLAM, WLLR…YLHV, WLIG…GYVL, and FFTF…IHLL. Positions 84 and 98 each coordinate heme b. Heme b-binding residues include histidine 183 and histidine 197. Histidine 202 serves as a coordination point for a ubiquinone. Transmembrane regions (helical) follow at residues 227 to 247, 289 to 309, 321 to 341, and 348 to 368; these read FKDI…VLIS, LGGV…PFYN, INQV…WIGA, and YVLI…VNPL.

This sequence belongs to the cytochrome b family. In terms of assembly, the main subunits of complex b-c1 are: cytochrome b, cytochrome c1 and the Rieske protein. The cofactor is heme b.

It localises to the mitochondrion inner membrane. Functionally, component of the ubiquinol-cytochrome c reductase complex (complex III or cytochrome b-c1 complex) that is part of the mitochondrial respiratory chain. The b-c1 complex mediates electron transfer from ubiquinol to cytochrome c. Contributes to the generation of a proton gradient across the mitochondrial membrane that is then used for ATP synthesis. This Drosophila sechellia (Fruit fly) protein is Cytochrome b (mt:Cyt-b).